The sequence spans 842 residues: Leucine--tRNA ligase (842 aa).

Residues 44 to 55 carry the 'HIGH' region motif; sequence PYPSANGLHVGH. The short motif at 619-623 is the 'KMSKS' region element; the sequence is KMSKS. Lys622 serves as a coordination point for ATP.

The protein belongs to the class-I aminoacyl-tRNA synthetase family.

Its subcellular location is the cytoplasm. The enzyme catalyses tRNA(Leu) + L-leucine + ATP = L-leucyl-tRNA(Leu) + AMP + diphosphate. This Borrelia turicatae (strain 91E135) protein is Leucine--tRNA ligase.